Consider the following 1210-residue polypeptide: Epidermal growth factor receptor (1210 aa).

An N-terminal signal peptide occupies residues 1 to 24 (MRPSGTARTTLLVLLTALCAAGGA). Residues 25–647 (LEEKKVCQGT…VWPSGPKIPS (623 aa)) are Extracellular-facing. Cysteines 31 and 58 form a disulfide. The stretch at 75 to 300 (DLSFLKTIQE…CVKKCPRNYV (226 aa)) is one Approximate repeat. 3 N-linked (GlcNAc...) asparagine glycosylation sites follow: Asn128, Asn175, and Asn196. Cystine bridges form between Cys157–Cys187, Cys190–Cys199, Cys194–Cys207, Cys215–Cys223, Cys219–Cys231, Cys232–Cys240, Cys236–Cys248, Cys251–Cys260, Cys264–Cys291, Cys295–Cys307, Cys311–Cys326, Cys329–Cys333, and Cys337–Cys362. Ser229 carries the post-translational modification Phosphoserine. Asn352, Asn413, and Asn444 each carry an N-linked (GlcNAc...) asparagine glycan. An Approximate repeat occupies 390–600 (RELEILKTVK…CVKTCPAGIM (211 aa)). Disulfide bonds link Cys470–Cys499, Cys506–Cys515, Cys510–Cys523, Cys526–Cys535, Cys539–Cys555, Cys558–Cys571, Cys562–Cys579, Cys582–Cys591, Cys595–Cys617, Cys620–Cys628, and Cys624–Cys636. The N-linked (GlcNAc...) asparagine glycan is linked to Asn528. Residue Asn568 is glycosylated (N-linked (GlcNAc...) asparagine). 2 N-linked (GlcNAc...) asparagine glycosylation sites follow: Asn603 and Asn623. Residues 648 to 670 (IATGIVGGLLFIVVVALGIGLFM) form a helical membrane-spanning segment. At 671-1210 (RRRHIVRKRT…APPSSEFIGA (540 aa)) the chain is on the cytoplasmic side. Thr680 carries the phosphothreonine; by PKC and PKD/PRKD1 modification. An important for dimerization, phosphorylation and activation region spans residues 690–706 (LVEPLTPSGEAPNQAHL). Thr695 carries the phosphothreonine; by PKD/PRKD1 modification. Ser697 carries the post-translational modification Phosphoserine. The region spanning 714–981 (FKKIKVLGSG…KMARDPQRYL (268 aa)) is the Protein kinase domain. A Glycyl lysine isopeptide (Lys-Gly) (interchain with G-Cter in ubiquitin) cross-link involves residue Lys718. 720–728 (LGSGAFGTV) serves as a coordination point for ATP. Lys739 is covalently cross-linked (Glycyl lysine isopeptide (Lys-Gly) (interchain with G-Cter in ubiquitin)). Lys747 lines the ATP pocket. Lys747 carries the N6-(2-hydroxyisobutyryl)lysine modification. Glycyl lysine isopeptide (Lys-Gly) (interchain with G-Cter in ubiquitin) cross-links involve residues Lys756 and Lys759. An ATP-binding site is contributed by 792–793 (TQ). The active-site Proton acceptor is Asp839. ATP is bound at residue Asp857. A Glycyl lysine isopeptide (Lys-Gly) (interchain with G-Cter in ubiquitin) cross-link involves residue Lys869. Tyr871 is subject to Phosphotyrosine. Glycyl lysine isopeptide (Lys-Gly) (interchain with G-Cter in ubiquitin) cross-links involve residues Lys931, Lys962, and Lys972. 2 positions are modified to phosphoserine: Ser993 and Ser997. 2 positions are modified to phosphotyrosine; by autocatalysis: Tyr1000 and Tyr1018. A phosphoserine mark is found at Ser1028 and Ser1041. A Phosphothreonine modification is found at Thr1043. At Ser1044 the chain carries Phosphoserine. Cys1051 is lipidated: S-palmitoyl cysteine. At Tyr1069 the chain carries Phosphotyrosine. Phosphoserine is present on residues Ser1070 and Ser1071. Phosphotyrosine; by autocatalysis occurs at positions 1092 and 1110. Positions 1113 to 1137 (QPLHPAPGRDLHYQNPHSNAVGNPE) are disordered. Residues 1127-1137 (NPHSNAVGNPE) show a composition bias toward polar residues. Cys1146 carries the S-palmitoyl cysteine lipid modification. At Ser1166 the chain carries Phosphoserine. The residue at position 1172 (Tyr1172) is a Phosphotyrosine; by autocatalysis. Tyr1197 bears the Phosphotyrosine mark. Arg1199 carries the post-translational modification Omega-N-methylarginine.

It belongs to the protein kinase superfamily. Tyr protein kinase family. EGF receptor subfamily. As to quaternary structure, binding of the ligand triggers homo- and/or heterodimerization of the receptor triggering its autophosphorylation. Heterodimer with ERBB2. Forms a complex with CCDC88A/GIV (via SH2-like region) and GNAI3 which leads to enhanced EGFR signaling and triggering of cell migration; binding of CCDC88A requires autophosphorylation of the EGFR C-terminal region, and ligand stimulation is required for recruitment of GNAI3 to the complex. Interacts with ERRFI1; inhibits dimerization of the kinase domain and autophosphorylation. Part of a complex with ERBB2 and either PIK3C2A or PIK3C2B. Interacts with GRB2; an adapter protein coupling the receptor to downstream signaling pathways. Interacts with GAB2; involved in signaling downstream of EGFR. Interacts with STAT3; mediates EGFR downstream signaling in cell proliferation. Interacts with RIPK1; involved in NF-kappa-B activation. Interacts (autophosphorylated) with CBL, CBLB and CBLC; involved in EGFR ubiquitination and regulation; interaction with CBL is reduced in the presence of tensin TNS4. Interacts with SOCS5; regulates EGFR degradation through ELOC- and ELOB-mediated ubiquitination and proteasomal degradation. Interacts with PRMT5; methylates EGFR and enhances interaction with PTPN6. Interacts (phosphorylated) with PTPN6; inhibits EGFR-dependent activation of MAPK/ERK. Interacts with COPG1; essential for regulation of EGF-dependent nuclear transport of EGFR by retrograde trafficking from the Golgi to the ER. Interacts with TNK2; this interaction is dependent on EGF stimulation and kinase activity of EGFR. Interacts with PCNA; positively regulates PCNA. Interacts with PELP1. Interacts with MUC1. Interacts with AP2M1. Interacts with FER. Interacts (via SH2 domains) with GRB2, NCK1 and NCK2. Interacts with EPS8; mediates EPS8 phosphorylation. Interacts with ATXN2. Interacts with GAREM1. Interacts (ubiquitinated) with ANKRD13A/B/D; the interaction is direct and may regulate EGFR internalization after EGF stimulation. Interacts with GPER1; the interaction occurs in an estrogen-dependent manner. Interacts (via C-terminal cytoplasmic kinase domain) with ZPR1 (via zinc fingers). Interacts with RNF115 and RNF126. Interacts with GPRC5A (via its transmembrane domain). Interacts with FAM83B; positively regulates EGFR inducing its autophosphorylation in absence of stimulation by EGF. Interacts with LAPTM4B; positively correlates with EGFR activation. Interacts with STX19. Interacts with CD44. Interacts with PGRMC1; the interaction requires PGRMC1 homodimerization. Interacts with PIKFYVE. Interacts with NEU3. Interacts with TRAF4. Interacts with the ant venom OMEGA-myrmeciitoxin(02)-Mg1a. Interacts with CD82; this interaction facilitates ligand-induced endocytosis of the receptor and its subsequent desensitization. Post-translationally, monoubiquitinated and polyubiquitinated upon EGF stimulation; which does not affect tyrosine kinase activity or signaling capacity but may play a role in lysosomal targeting. Polyubiquitin linkage is mainly through 'Lys-63', but linkage through 'Lys-48', 'Lys-11' and 'Lys-29' also occurs. Deubiquitinated by OTUD7B, preventing degradation. Ubiquitinated by RNF115 and RNF126. Ubiquitinated by ZNRF1 or CBL at different lysines in response to EGF stimulation; leading to recruitment of the ESCRT machinery and subsequent degradation in the lysosomes. Deubiquitinated by UCHL1 leading to the inhibition of its degradation. In terms of processing, phosphorylated on Tyr residues in response to EGF. Phosphorylation at Ser-697 is partial and occurs only if Thr-695 is phosphorylated. Phosphorylation at Thr-680 and Thr-695 by PRKD1 inhibits EGF-induced MAPK8/JNK1 activation. Dephosphorylation by PTPRJ prevents endocytosis and stabilizes the receptor at the plasma membrane. Autophosphorylation at Tyr-1199 is stimulated by methylation at Arg-1199 and enhances interaction with PTPN6. Autophosphorylation at Tyr-1092 and/or Tyr-1110 recruits STAT3. Dephosphorylated by PTPN1 and PTPN2. Palmitoylated on Cys residues by ZDHHC20. Palmitoylation inhibits internalization after ligand binding, and increases the persistence of tyrosine-phosphorylated EGFR at the cell membrane. Palmitoylation increases the amplitude and duration of EGFR signaling. Post-translationally, methylated. Methylation at Arg-1199 by PRMT5 stimulates phosphorylation at Tyr-1197.

It localises to the cell membrane. The protein resides in the endoplasmic reticulum membrane. It is found in the golgi apparatus membrane. Its subcellular location is the nucleus membrane. The protein localises to the endosome. It localises to the endosome membrane. The protein resides in the nucleus. The enzyme catalyses L-tyrosyl-[protein] + ATP = O-phospho-L-tyrosyl-[protein] + ADP + H(+). With respect to regulation, endocytosis and inhibition of the activated EGFR by phosphatases like PTPRJ and PTPRK constitute immediate regulatory mechanisms. Upon EGF-binding phosphorylates EPS15 that regulates EGFR endocytosis and activity. Moreover, inducible feedback inhibitors including LRIG1, SOCS4, SOCS5 and ERRFI1 constitute alternative regulatory mechanisms for the EGFR signaling. Receptor tyrosine kinase binding ligands of the EGF family and activating several signaling cascades to convert extracellular cues into appropriate cellular responses. Known ligands include EGF, TGFA/TGF-alpha, AREG, epigen/EPGN, BTC/betacellulin, epiregulin/EREG and HBEGF/heparin-binding EGF. Ligand binding triggers receptor homo- and/or heterodimerization and autophosphorylation on key cytoplasmic residues. The phosphorylated receptor recruits adapter proteins like GRB2 which in turn activates complex downstream signaling cascades. Activates at least 4 major downstream signaling cascades including the RAS-RAF-MEK-ERK, PI3 kinase-AKT, PLCgamma-PKC and STATs modules. May also activate the NF-kappa-B signaling cascade. Also directly phosphorylates other proteins like RGS16, activating its GTPase activity and probably coupling the EGF receptor signaling to the G protein-coupled receptor signaling. Also phosphorylates MUC1 and increases its interaction with SRC and CTNNB1/beta-catenin. Positively regulates cell migration via interaction with CCDC88A/GIV which retains EGFR at the cell membrane following ligand stimulation, promoting EGFR signaling which triggers cell migration. Plays a role in enhancing learning and memory performance. Plays a role in mammalian pain signaling (long-lasting hypersensitivity). This chain is Epidermal growth factor receptor, found in Mus musculus (Mouse).